Reading from the N-terminus, the 78-residue chain is Small ribosomal subunit protein uS17 (78 aa).

This sequence belongs to the universal ribosomal protein uS17 family. Part of the 30S ribosomal subunit.

Functionally, one of the primary rRNA binding proteins, it binds specifically to the 5'-end of 16S ribosomal RNA. The polypeptide is Small ribosomal subunit protein uS17 (Rhizobium meliloti (strain 1021) (Ensifer meliloti)).